An 89-amino-acid chain; its full sequence is Small ribosomal subunit protein uS15 (89 aa).

It belongs to the universal ribosomal protein uS15 family. Part of the 30S ribosomal subunit. Forms a bridge to the 50S subunit in the 70S ribosome, contacting the 23S rRNA.

Its function is as follows. One of the primary rRNA binding proteins, it binds directly to 16S rRNA where it helps nucleate assembly of the platform of the 30S subunit by binding and bridging several RNA helices of the 16S rRNA. Functionally, forms an intersubunit bridge (bridge B4) with the 23S rRNA of the 50S subunit in the ribosome. The protein is Small ribosomal subunit protein uS15 of Leuconostoc mesenteroides subsp. mesenteroides (strain ATCC 8293 / DSM 20343 / BCRC 11652 / CCM 1803 / JCM 6124 / NCDO 523 / NBRC 100496 / NCIMB 8023 / NCTC 12954 / NRRL B-1118 / 37Y).